The primary structure comprises 147 residues: UPF0306 protein YhbP (147 aa).

The protein belongs to the UPF0306 family.

The polypeptide is UPF0306 protein YhbP (Escherichia coli O6:K15:H31 (strain 536 / UPEC)).